The chain runs to 777 residues: Reticulon-1 (777 aa).

4 disordered regions span residues 1 to 77, 129 to 182, 198 to 245, and 293 to 573; these read MAAP…ETAS, NGHI…ILAD, TRPQ…PVEG, and ATHE…IPGP. A phosphoserine mark is found at serine 13 and serine 68. Residues 199–233 are compositionally biased toward basic and acidic residues; it reads RPQEAKGQEEQSPGLEDKDLDFKDKDSEVSTKPEG. Phosphoserine is present on residues serine 210, serine 241, and serine 325. Positions 326–339 are enriched in low complexity; that stretch reads PGSVTPPSSGTEPS. Phosphoserine occurs at positions 348 and 350. The span at 393 to 406 shows a compositional bias: polar residues; sequence IPSSLDQEASSAES. A Phosphoserine modification is found at serine 485. Residues 495-510 show a composition bias toward basic and acidic residues; that stretch reads AIREETSSRATEERAP. The span at 525–534 shows a compositional bias: polar residues; that stretch reads TPVTLQSRPE. The Reticulon domain maps to 590 to 777; sequence AIDLLYWRDI…KIPGAKRHAE (188 aa). Transmembrane regions (helical) follow at residues 604–624 and 706–726; these read IVFGSFLLLLFSLTQFSVVSV and FAVLMWLLTYVGALFNGLTLL.

As to quaternary structure, interacts with NDRG1. Interacts with BACE1. Interacts with TMEM33. Interacts with UGCG; regulates the ceramide glucosyltransferase activity of UGCG. In terms of tissue distribution, expressed predominantly in central and peripheral nervous system of newborn and adult rats. Low levels have been also detected in heart, adrenal gland and spleen. Expression of isoform RTN1-B is restricted to particular neuronal types.

Its subcellular location is the endoplasmic reticulum membrane. It is found in the golgi apparatus membrane. In terms of biological role, inhibits amyloid precursor protein processing, probably by blocking BACE1 activity. In Rattus norvegicus (Rat), this protein is Reticulon-1 (Rtn1).